The following is a 268-amino-acid chain: 3-methyl-2-oxobutanoate hydroxymethyltransferase (268 aa).

The Mg(2+) site is built by aspartate 46 and aspartate 85. 3-methyl-2-oxobutanoate contacts are provided by residues 46–47, aspartate 85, and lysine 114; that span reads DS. Glutamate 116 contacts Mg(2+). The active-site Proton acceptor is glutamate 183.

It belongs to the PanB family. In terms of assembly, homodecamer; pentamer of dimers. Mg(2+) serves as cofactor.

The protein localises to the cytoplasm. It catalyses the reaction 3-methyl-2-oxobutanoate + (6R)-5,10-methylene-5,6,7,8-tetrahydrofolate + H2O = 2-dehydropantoate + (6S)-5,6,7,8-tetrahydrofolate. It participates in cofactor biosynthesis; coenzyme A biosynthesis. In terms of biological role, catalyzes the reversible reaction in which hydroxymethyl group from 5,10-methylenetetrahydrofolate is transferred onto alpha-ketoisovalerate to form ketopantoate. This chain is 3-methyl-2-oxobutanoate hydroxymethyltransferase, found in Sulfolobus acidocaldarius (strain ATCC 33909 / DSM 639 / JCM 8929 / NBRC 15157 / NCIMB 11770).